Consider the following 375-residue polypeptide: Transcription factor E2F4 (375 aa).

The DNA-binding element occupies 12 to 81 (SRHEKSLGLL…KNSIQWKGVG (70 aa)). The interval 39–61 (LKAAADTLAVRQKRRIYDITNVL) is leucine-zipper. The DEF box motif lies at 44–81 (DTLAVRQKRRIYDITNVLEGIGLIEKKSKNSIQWKGVG). Positions 82–177 (PGCNTREIAD…NTNGQKKFQI (96 aa)) are dimerization. Residues 197–300 (SSAPVVVPVP…PDPSTSFQPI (104 aa)) form a disordered region. The segment covering 220–270 (STPQRPALTPQNDIATSPAPTVPHSTISNAESQDCPTGQTFSMENTTSSRL) has biased composition (polar residues). The span at 280–296 (SSASLDNSNDSPDPSTS) shows a compositional bias: low complexity. The segment at 299 to 375 (PIKSDLSDVL…CDLFDVPINL (77 aa)) is transactivation.

Belongs to the E2F/DP family. In terms of assembly, component of the drtf1/e2f transcription factor complex. Component of the EDM complex, at least composed of e2f4, e2f5, mcidas and tfdp1.

The protein resides in the nucleus. Transcription activator that binds DNA cooperatively with DP proteins through the E2 recognition site, 5'-TTTC[CG]CGC-3' found in the promoter region of a number of genes. Component of the EDM complex, a complex specifically required for multiciliate cell differentiation: the EDM complex binds and activate genes required for centriole biogenesis. Activates genes required for centriole assembly (plk4, cep152) and genes specifically required for motile cilia formation (foxj1). Also promotes the deuterosome pathway of centriole biogenesis by activating expression of deup1, but not its paralog cep63. This Xenopus laevis (African clawed frog) protein is Transcription factor E2F4.